A 67-amino-acid polypeptide reads, in one-letter code: Non-specific lipid-transfer protein 2P (67 aa).

4 disulfide bridges follow: Cys2-Cys34, Cys10-Cys24, Cys25-Cys60, and Cys36-Cys67.

Functionally, transfer lipids across membranes. May play a role in plant defense or in the biosynthesis of cuticle layers. The polypeptide is Non-specific lipid-transfer protein 2P (Triticum aestivum (Wheat)).